We begin with the raw amino-acid sequence, 482 residues long: Aspartyl/glutamyl-tRNA(Asn/Gln) amidotransferase subunit B (482 aa).

This sequence belongs to the GatB/GatE family. GatB subfamily. In terms of assembly, heterotrimer of A, B and C subunits.

The enzyme catalyses L-glutamyl-tRNA(Gln) + L-glutamine + ATP + H2O = L-glutaminyl-tRNA(Gln) + L-glutamate + ADP + phosphate + H(+). It catalyses the reaction L-aspartyl-tRNA(Asn) + L-glutamine + ATP + H2O = L-asparaginyl-tRNA(Asn) + L-glutamate + ADP + phosphate + 2 H(+). Functionally, allows the formation of correctly charged Asn-tRNA(Asn) or Gln-tRNA(Gln) through the transamidation of misacylated Asp-tRNA(Asn) or Glu-tRNA(Gln) in organisms which lack either or both of asparaginyl-tRNA or glutaminyl-tRNA synthetases. The reaction takes place in the presence of glutamine and ATP through an activated phospho-Asp-tRNA(Asn) or phospho-Glu-tRNA(Gln). The polypeptide is Aspartyl/glutamyl-tRNA(Asn/Gln) amidotransferase subunit B (Thermotoga neapolitana (strain ATCC 49049 / DSM 4359 / NBRC 107923 / NS-E)).